The primary structure comprises 151 residues: Large ribosomal subunit protein uL13 (151 aa).

It belongs to the universal ribosomal protein uL13 family. As to quaternary structure, part of the 50S ribosomal subunit.

Functionally, this protein is one of the early assembly proteins of the 50S ribosomal subunit, although it is not seen to bind rRNA by itself. It is important during the early stages of 50S assembly. In Microcystis aeruginosa (strain NIES-843 / IAM M-2473), this protein is Large ribosomal subunit protein uL13.